Reading from the N-terminus, the 240-residue chain is Putative peptidoglycan hydrolase Rv2525c (240 aa).

The tat-type signal signal peptide spans 1 to 33; sequence MSVSRRDVLKFAAATPGVLGLGVVASSLRAAPA.

Predicted to be exported by the Tat system. The position of the signal peptide cleavage has not been experimentally proven.

The protein resides in the secreted. It catalyses the reaction Hydrolysis of (1-&gt;4)-beta-linkages between N-acetylmuramic acid and N-acetyl-D-glucosamine residues in a peptidoglycan and between N-acetyl-D-glucosamine residues in chitodextrins.. Its pathway is cell wall degradation; peptidoglycan degradation. In terms of biological role, may function as a peptidoglycan hydrolase with glycosidase activity. In vitro, displays esterase activity toward p-nitrophenyl esters of various acyl chain length (C4 to C16), with a preference for p-nitrophenyl butyrate (C4). The polypeptide is Putative peptidoglycan hydrolase Rv2525c (Mycobacterium tuberculosis (strain ATCC 25618 / H37Rv)).